The chain runs to 405 residues: S-adenosylmethionine synthase (405 aa).

141–146 lines the ATP pocket; that stretch reads GQGSVD.

Belongs to the AdoMet synthase 2 family. Mg(2+) is required as a cofactor.

It carries out the reaction L-methionine + ATP + H2O = S-adenosyl-L-methionine + phosphate + diphosphate. It functions in the pathway amino-acid biosynthesis; S-adenosyl-L-methionine biosynthesis; S-adenosyl-L-methionine from L-methionine: step 1/1. In terms of biological role, catalyzes the formation of S-adenosylmethionine from methionine and ATP. In Methanococcus maripaludis (strain C5 / ATCC BAA-1333), this protein is S-adenosylmethionine synthase.